Reading from the N-terminus, the 399-residue chain is O-antigen polymerase (399 aa).

Helical transmembrane passes span 4–24, 37–57, 64–84, 97–117, 151–171, 185–205, 222–242, 309–329, 353–373, and 374–394; these read FPPGAILRDVLNVFFVALVLV, LVFTIFSWSAVILWVIALTIF, AIMGGRSYILFPAVFIALVIL, IVCYIIFLMFMVATISIIDVL, GGFSDALNFGYMLTLGVLLCM, IISFVLFIAICMSLTRGAILV, FCGITLFVIIIPVLAISTNIF, FFWIALETGIIGLIINIIYLA, LYFLFGSIYFISAALSSAPSS, and STFSIYYWTVLALIPFLKLTN.

The protein resides in the cell inner membrane. It carries out the reaction n lipid-linked O-antigen repeat units = a lipid-linked O antigen + (n-1) polyisoprenyl diphosphate.. It functions in the pathway bacterial outer membrane biogenesis; LPS O-antigen biosynthesis. In terms of biological role, polymerase involved in the biosynthesis of the lipopolysaccharide (LPS). Catalyzes the polymerization of the O-antigen repeat units on the periplasmic face of the inner membrane, leading to the formation of the lipid-linked O-antigen molecule. The chain is O-antigen polymerase from Salmonella muenchen.